The chain runs to 336 residues: tRNA N6-adenosine threonylcarbamoyltransferase (336 aa).

The Fe cation site is built by His-114 and His-118. Substrate contacts are provided by residues 136–140 (LVSGG), Asp-169, Gly-182, Asp-186, and Asn-275. Fe cation is bound at residue Asp-301.

This sequence belongs to the KAE1 / TsaD family. Fe(2+) serves as cofactor.

The protein localises to the cytoplasm. It carries out the reaction L-threonylcarbamoyladenylate + adenosine(37) in tRNA = N(6)-L-threonylcarbamoyladenosine(37) in tRNA + AMP + H(+). In terms of biological role, required for the formation of a threonylcarbamoyl group on adenosine at position 37 (t(6)A37) in tRNAs that read codons beginning with adenine. Is involved in the transfer of the threonylcarbamoyl moiety of threonylcarbamoyl-AMP (TC-AMP) to the N6 group of A37, together with TsaE and TsaB. TsaD likely plays a direct catalytic role in this reaction. This is tRNA N6-adenosine threonylcarbamoyltransferase from Streptococcus pneumoniae serotype 2 (strain D39 / NCTC 7466).